We begin with the raw amino-acid sequence, 481 residues long: Aspartyl/glutamyl-tRNA(Asn/Gln) amidotransferase subunit B (481 aa).

Belongs to the GatB/GatE family. GatB subfamily. In terms of assembly, heterotrimer of A, B and C subunits.

It catalyses the reaction L-glutamyl-tRNA(Gln) + L-glutamine + ATP + H2O = L-glutaminyl-tRNA(Gln) + L-glutamate + ADP + phosphate + H(+). The catalysed reaction is L-aspartyl-tRNA(Asn) + L-glutamine + ATP + H2O = L-asparaginyl-tRNA(Asn) + L-glutamate + ADP + phosphate + 2 H(+). Allows the formation of correctly charged Asn-tRNA(Asn) or Gln-tRNA(Gln) through the transamidation of misacylated Asp-tRNA(Asn) or Glu-tRNA(Gln) in organisms which lack either or both of asparaginyl-tRNA or glutaminyl-tRNA synthetases. The reaction takes place in the presence of glutamine and ATP through an activated phospho-Asp-tRNA(Asn) or phospho-Glu-tRNA(Gln). In Cellvibrio japonicus (strain Ueda107) (Pseudomonas fluorescens subsp. cellulosa), this protein is Aspartyl/glutamyl-tRNA(Asn/Gln) amidotransferase subunit B.